The primary structure comprises 144 residues: Large ribosomal subunit protein uL16 (144 aa).

It belongs to the universal ribosomal protein uL16 family. In terms of assembly, part of the 50S ribosomal subunit.

Its function is as follows. Binds 23S rRNA and is also seen to make contacts with the A and possibly P site tRNAs. The chain is Large ribosomal subunit protein uL16 from Bacillus pumilus (strain SAFR-032).